The following is a 142-amino-acid chain: Trafficking protein particle complex subunit 1 (142 aa).

This sequence belongs to the TRAPP small subunits family. BET5 subfamily. As to quaternary structure, part of the multisubunit TRAPP (transport protein particle) complex.

It is found in the golgi apparatus. The protein resides in the cis-Golgi network. It localises to the endoplasmic reticulum. Its function is as follows. May play a role in vesicular transport from endoplasmic reticulum to Golgi. This is Trafficking protein particle complex subunit 1 (trappc1-1) from Dictyostelium discoideum (Social amoeba).